The following is a 34-amino-acid chain: Photosystem II reaction center protein Psb30 (34 aa).

A helical membrane pass occupies residues valine 7–isoleucine 27.

It belongs to the Psb30/Ycf12 family. In terms of assembly, PSII is composed of 1 copy each of membrane proteins PsbA, PsbB, PsbC, PsbD, PsbE, PsbF, PsbH, PsbI, PsbJ, PsbK, PsbL, PsbM, PsbT, PsbX, PsbY, PsbZ, Psb30/Ycf12, peripheral proteins of the oxygen-evolving complex and a large number of cofactors. It forms dimeric complexes.

It is found in the plastid. The protein resides in the chloroplast thylakoid membrane. In terms of biological role, a core subunit of photosystem II (PSII), probably helps stabilize the reaction center. This chain is Photosystem II reaction center protein Psb30, found in Guillardia theta (Cryptophyte).